The chain runs to 133 residues: p53 and DNA damage-regulated protein 1 (133 aa).

It belongs to the prefoldin subunit beta family. Component of the PAQosome complex which is responsible for the biogenesis of several protein complexes and which consists of R2TP complex members RUVBL1, RUVBL2, RPAP3 and PIH1D1, URI complex members PFDN2, PFDN6, PDRG1, UXT and URI1 as well as ASDURF, POLR2E and DNAAF10/WDR92. Predominantly expressed in normal testis and exhibits reduced but detectable expression in other organs.

It localises to the cytoplasm. May play a role in chaperone-mediated protein folding. The polypeptide is p53 and DNA damage-regulated protein 1 (PDRG1) (Homo sapiens (Human)).